We begin with the raw amino-acid sequence, 822 residues long: Cadherin-3 (822 aa).

A signal peptide spans 1–25 (MELLSGPHAFLLLLLQVCWLRSVVS). Positions 26–99 (EPYRAGFIGE…PTRILRRRKR (74 aa)) are excised as a propeptide. 5 Cadherin domains span residues 100 to 207 (EWVM…KPKF), 208 to 320 (TQDT…APEF), 321 to 432 (EPQK…APVF), 433 to 538 (VPPS…DHGP), and 539 to 645 (IPEP…RPWK). Topologically, residues 100–647 (EWVMPPIFVP…NDCPRPWKGG (548 aa)) are extracellular. N-linked (GlcNAc...) asparagine glycosylation occurs at Asn-192. N-linked (GlcNAc...) asparagine glycosylation occurs at Asn-558. A helical transmembrane segment spans residues 648–670 (FILPILGAVLALLTLLLALLLLV). The Cytoplasmic portion of the chain corresponds to 671–822 (RKKRKVKEPL…ADMYGGGEDD (152 aa)).

As to quaternary structure, interacts with CDCP1 and CTNNB1.

Its subcellular location is the cell membrane. Its function is as follows. Cadherins are calcium-dependent cell adhesion proteins. They preferentially interact with themselves in a homophilic manner in connecting cells; cadherins may thus contribute to the sorting of heterogeneous cell types. The polypeptide is Cadherin-3 (Cdh3) (Mus musculus (Mouse)).